We begin with the raw amino-acid sequence, 4377 residues long: E3 ubiquitin-protein ligase HUWE1 (4377 aa).

Serine 648 and serine 649 each carry phosphoserine. Disordered stretches follow at residues 706–758 (KADG…VVGT), 978–1001 (DEKAGTTQGGKRSDGEQDGTAGSM), and 1018–1038 (TLAPMETDEPSSSDSKGKSKI). The segment covering 725–735 (ASSEDEEEEEV) has biased composition (acidic residues). Polar residues predominate over residues 737–756 (AMQSFNSAQQNETEPNQQVV). Serine 740 carries the post-translational modification Phosphoserine. The residue at position 1084 (serine 1084) is a Phosphoserine. Over residues 1291 to 1302 (LSKEKEGSRGEE) the composition is skewed to basic and acidic residues. Positions 1291–1320 (LSKEKEGSRGEEEAGQEEGGSRREPQVNQQ) are disordered. The UBA domain occupies 1316 to 1355 (QVNQQQLQQLMDMGFTREHAMEALLNTSTMEQATEYLLTH). 4 positions are modified to phosphoserine: serine 1368, serine 1370, serine 1382, and serine 1395. A UIM domain is found at 1370-1389 (SEEDQMMRAIAMSLGQDIPM). The interval 1396–1415 (PEEVACRKEEEERKAREKQE) is disordered. Residues 1603 to 1680 (RAQMTKYLQS…ETGNRRPVML (78 aa)) form the WWE domain. The interval 1690 to 1733 (KNSKSSNGQELEKTLEESKETDIKHKENKGNDIPLALESTNTEK) is disordered. The span at 1699-1719 (ELEKTLEESKETDIKHKENKG) shows a compositional bias: basic and acidic residues. Residue serine 1907 is modified to Phosphoserine. Disordered stretches follow at residues 2019-2065 (APAE…SKPL), 2262-2343 (SLFG…QEMQ), and 2355-2479 (LLER…ASPL). Polar residues predominate over residues 2022 to 2033 (ETSTTGTSQGEA). A Phosphothreonine modification is found at threonine 2035. Positions 2037-2057 (EETREGKKDKEGDRTSEEGKQ) are enriched in basic and acidic residues. Low complexity-rich tracts occupy residues 2262–2271 (SLFGSKSASS) and 2278–2291 (DAQGASQDSSSHQQ). Serine 2266 is subject to Phosphoserine. Lysine 2267 is modified (N6-acetyllysine). Composition is skewed to acidic residues over residues 2295–2306 (EPGEAEVQEEDH) and 2314–2325 (ADGDIMDGEAET). Phosphoserine occurs at positions 2362, 2365, and 2391. Over residues 2388-2398 (SNLSQASTLQA) the composition is skewed to polar residues. Residues 2408–2472 (DPEDEEEHTQ…SEMELDEDYP (65 aa)) show a composition bias toward acidic residues. Phosphoserine is present on residues serine 2527, serine 2532, and serine 2535. Threonine 2554 bears the Phosphothreonine mark. A phosphoserine mark is found at serine 2584, serine 2595, and serine 2619. The segment covering 2704–2716 (IIDKGKEDKENRD) has biased composition (basic and acidic residues). Disordered regions lie at residues 2704-2970 (IIDK…GVDP), 2991-3012 (IRPPTRSAPSSNSSAPAVVGNP), and 3036-3059 (QQRAEQQRRELAQNASSDTPMDPV). Polar residues predominate over residues 2717–2736 (QSAQCTVTKTNDSTEQNVSD). The span at 2738–2756 (TPMPDSYPTTPSSTDAPTS) shows a compositional bias: low complexity. The residue at position 2751 (threonine 2751) is a Phosphothreonine. 3 stretches are compositionally biased toward polar residues: residues 2818-2835 (AETTQMELSPAPTITSLS), 2847-2864 (AVSSQLEGSPMDTSSLAS), and 2877-2890 (AGSSEQPTAGSSTP). Serine 2826, serine 2833, serine 2835, serine 2861, serine 2887, and serine 2888 each carry phosphoserine. Threonine 2889 carries the phosphothreonine modification. Low complexity-rich tracts occupy residues 2913–2932 (PPEDSSPPASSESSSTRDSA) and 2993–3007 (PPTRSAPSSNSSAPA). At serine 2918 the chain carries Phosphoserine. Phosphoserine occurs at positions 3116, 3117, 3122, 3127, and 3135. At arginine 3149 the chain carries Omega-N-methylarginine. Disordered stretches follow at residues 3243–3266 (PKLSTSEERGKKSSKSCASSSHEN), 3352–3383 (TQQRTKETNCESDRERGSKQACSPCSSQSSSS), 3405–3429 (GKNSVKSVPVSSGGEGETSPHSLEA), 3471–3514 (SEVQ…TTPV), and 3539–3566 (TPTTATTTVSTSTTKGSKSPAKVGEGGS). Basic and acidic residues predominate over residues 3355-3369 (RTKETNCESDRERGS). Positions 3370 to 3383 (KQACSPCSSQSSSS) are enriched in low complexity. Composition is skewed to low complexity over residues 3475-3503 (TNSSNSGSSTAATSNTSTTTTTTTTATAP) and 3539-3552 (TPTTATTTVSTSTT). A phosphoserine mark is found at serine 3557, serine 3663, serine 3753, serine 3758, serine 3760, and serine 3761. Residues 3738–3759 (TRRANKKAKQTGRLGSSGLGSA) form a disordered region. A compositionally biased stretch (low complexity) spans 3749-3759 (GRLGSSGLGSA). 2 disordered regions span residues 3782 to 3850 (EGQR…LPLL) and 3897 to 3951 (RESK…SSSL). The segment covering 3794–3803 (TSESSNQSET) has biased composition (polar residues). A phosphoserine mark is found at serine 3810, serine 3818, and serine 3830. Residues 3817–3828 (PSPSAQDTQSIV) are compositionally biased toward polar residues. Phosphothreonine is present on threonine 3833. Basic and acidic residues-rich tracts occupy residues 3836-3845 (GEKEKEEKPP) and 3897-3918 (RESKPPVRDTRESQLAHIKDEP). Serine 3909 and serine 3922 each carry phosphoserine. Over residues 3919–3928 (PPLSPAPLTP) the composition is skewed to pro residues. Threonine 3927 and threonine 3930 each carry phosphothreonine. The span at 3941 to 3951 (EPSSMHISSSL) shows a compositional bias: polar residues. Residues 4041 to 4377 (SPEEMKNRLY…QECSEGFGLA (337 aa)) enclose the HECT domain. Tyrosine 4274 bears the Phosphotyrosine mark. The active-site Glycyl thioester intermediate is cysteine 4344.

It belongs to the UPL family. TOM1/PTR1 subfamily. Interacts with isoform p19ARF of CDKN2A which strongly inhibits HUWE1 ubiquitin ligase activity. Interacts with MYCN, POLB and CDC6. Interacts with PA2G4. Interacts with NR1D1. Interacts with AMBRA1. Interacts with HAPSTR1. Interacts with HAPSTR2. In hepatocytes, interacts with PAQR3; the interaction promotes PPARA poylubiquitination and STUB1-mediated degradation. Post-translationally, phosphorylated on tyrosine; phosphorylation is probably required for its ability to inhibit TP53 transactivation. Widely expressed.

The protein localises to the cytoplasm. It localises to the nucleus. Its subcellular location is the mitochondrion. It catalyses the reaction S-ubiquitinyl-[E2 ubiquitin-conjugating enzyme]-L-cysteine + [acceptor protein]-L-lysine = [E2 ubiquitin-conjugating enzyme]-L-cysteine + N(6)-ubiquitinyl-[acceptor protein]-L-lysine.. It participates in protein modification; protein ubiquitination. Functionally, E3 ubiquitin-protein ligase which mediates ubiquitination and subsequent proteasomal degradation of target proteins. Regulates apoptosis by catalyzing the polyubiquitination and degradation of MCL1. Mediates monoubiquitination of DNA polymerase beta (POLB) at 'Lys-41', 'Lys-61' and 'Lys-81', thereby playing a role in base-excision repair. Also ubiquitinates the p53/TP53 tumor suppressor and core histones including H1, H2A, H2B, H3 and H4. Ubiquitinates MFN2 to negatively regulate mitochondrial fusion in response to decreased stearoylation of TFRC. Ubiquitination of MFN2 also takes place following induction of mitophagy; AMBRA1 acts as a cofactor for HUWE1-mediated ubiquitination. Regulates neural differentiation and proliferation by catalyzing the polyubiquitination and degradation of MYCN. May regulate abundance of CDC6 after DNA damage by polyubiquitinating and targeting CDC6 to degradation. Mediates polyubiquitination of PA2G4. Acts in concert with MYCBP2 to regulate the circadian clock gene expression by promoting the lithium-induced ubiquination and degradation of NR1D1. Binds to an upstream initiator-like sequence in the preprodynorphin gene. Mediates HAPSTR1 degradation, but is also a required cofactor in the pathway by which HAPSTR1 governs stress signaling. Acts as a regulator of the JNK and NF-kappa-B signaling pathways by mediating assembly of heterotypic 'Lys-63'-/'Lys-48'-linked branched ubiquitin chains that are then recognized by TAB2: HUWE1 mediates branching of 'Lys-48'-linked chains of substrates initially modified with 'Lys-63'-linked conjugates by TRAF6. 'Lys-63'-/'Lys-48'-linked branched ubiquitin chains protect 'Lys-63'-linkages from CYLD deubiquitination. Ubiquitinates PPARA in hepatocytes. This Mus musculus (Mouse) protein is E3 ubiquitin-protein ligase HUWE1 (Huwe1).